Reading from the N-terminus, the 645-residue chain is DNA mismatch repair protein MutL (645 aa).

The interval 371–403 is disordered; sequence VHDQKDKNHDVESHKNNLDSTSSTNNESTEVSN. Residues 372 to 387 show a composition bias toward basic and acidic residues; it reads HDQKDKNHDVESHKNN. The span at 390-402 shows a compositional bias: low complexity; the sequence is STSSTNNESTEVS.

This sequence belongs to the DNA mismatch repair MutL/HexB family.

In terms of biological role, this protein is involved in the repair of mismatches in DNA. It is required for dam-dependent methyl-directed DNA mismatch repair. May act as a 'molecular matchmaker', a protein that promotes the formation of a stable complex between two or more DNA-binding proteins in an ATP-dependent manner without itself being part of a final effector complex. This chain is DNA mismatch repair protein MutL, found in Staphylococcus epidermidis (strain ATCC 35984 / DSM 28319 / BCRC 17069 / CCUG 31568 / BM 3577 / RP62A).